The following is a 79-amino-acid chain: Sulfur carrier protein TusA (79 aa).

The active-site Cysteine persulfide intermediate is C17.

Belongs to the sulfur carrier protein TusA family.

It localises to the cytoplasm. Its function is as follows. Sulfur carrier protein which probably makes part of a sulfur-relay system. The polypeptide is Sulfur carrier protein TusA (Mannheimia succiniciproducens (strain KCTC 0769BP / MBEL55E)).